Here is a 115-residue protein sequence, read N- to C-terminus: Large ribosomal subunit protein bL19 (115 aa).

It belongs to the bacterial ribosomal protein bL19 family.

In terms of biological role, this protein is located at the 30S-50S ribosomal subunit interface and may play a role in the structure and function of the aminoacyl-tRNA binding site. This Streptococcus pneumoniae serotype 2 (strain D39 / NCTC 7466) protein is Large ribosomal subunit protein bL19.